Reading from the N-terminus, the 204-residue chain is Holliday junction branch migration complex subunit RuvA (204 aa).

Residues 1–64 are domain I; that stretch reads MIGRLRGVVI…EDAQLLYGFN (64 aa). The interval 65–143 is domain II; sequence HKQERALFRE…GWVSHDLFSP (79 aa). Positions 144–155 are flexible linker; that stretch reads AEISLPARESVL. Residues 156 to 204 are domain III; sequence RAPDSSEEAASALVALGYKPQQASQIVSKIAKEGMSVEDIIRESLRSLV.

It belongs to the RuvA family. As to quaternary structure, homotetramer. Forms an RuvA(8)-RuvB(12)-Holliday junction (HJ) complex. HJ DNA is sandwiched between 2 RuvA tetramers; dsDNA enters through RuvA and exits via RuvB. An RuvB hexamer assembles on each DNA strand where it exits the tetramer. Each RuvB hexamer is contacted by two RuvA subunits (via domain III) on 2 adjacent RuvB subunits; this complex drives branch migration. In the full resolvosome a probable DNA-RuvA(4)-RuvB(12)-RuvC(2) complex forms which resolves the HJ.

It localises to the cytoplasm. Functionally, the RuvA-RuvB-RuvC complex processes Holliday junction (HJ) DNA during genetic recombination and DNA repair, while the RuvA-RuvB complex plays an important role in the rescue of blocked DNA replication forks via replication fork reversal (RFR). RuvA specifically binds to HJ cruciform DNA, conferring on it an open structure. The RuvB hexamer acts as an ATP-dependent pump, pulling dsDNA into and through the RuvAB complex. HJ branch migration allows RuvC to scan DNA until it finds its consensus sequence, where it cleaves and resolves the cruciform DNA. The protein is Holliday junction branch migration complex subunit RuvA of Aeromonas salmonicida (strain A449).